We begin with the raw amino-acid sequence, 246 residues long: Orotidine 5'-phosphate decarboxylase (246 aa).

Substrate-binding positions include aspartate 22, lysine 44, 71–80 (DLKYHDIPHT), threonine 130, arginine 191, glutamine 201, glycine 221, and arginine 222. The Proton donor role is filled by lysine 73.

The protein belongs to the OMP decarboxylase family. Type 1 subfamily. As to quaternary structure, homodimer.

The enzyme catalyses orotidine 5'-phosphate + H(+) = UMP + CO2. It functions in the pathway pyrimidine metabolism; UMP biosynthesis via de novo pathway; UMP from orotate: step 2/2. In terms of biological role, catalyzes the decarboxylation of orotidine 5'-monophosphate (OMP) to uridine 5'-monophosphate (UMP). The chain is Orotidine 5'-phosphate decarboxylase from Neisseria meningitidis serogroup C (strain 053442).